A 220-amino-acid polypeptide reads, in one-letter code: Elongation factor Ts, chloroplastic (220 aa).

The protein belongs to the EF-Ts family.

It localises to the plastid. The protein resides in the chloroplast. Its function is as follows. Associates with the EF-Tu.GDP complex and induces the exchange of GDP to GTP. It remains bound to the aminoacyl-tRNA.EF-Tu.GTP complex up to the GTP hydrolysis stage on the ribosome. The sequence is that of Elongation factor Ts, chloroplastic (tsf) from Porphyra purpurea (Red seaweed).